The chain runs to 140 residues: Holo-[acyl-carrier-protein] synthase (140 aa).

Residues Asp-8 and Glu-62 each contribute to the Mg(2+) site.

This sequence belongs to the P-Pant transferase superfamily. AcpS family. Mg(2+) serves as cofactor.

Its subcellular location is the cytoplasm. The catalysed reaction is apo-[ACP] + CoA = holo-[ACP] + adenosine 3',5'-bisphosphate + H(+). In terms of biological role, transfers the 4'-phosphopantetheine moiety from coenzyme A to a Ser of acyl-carrier-protein. This chain is Holo-[acyl-carrier-protein] synthase, found in Cupriavidus taiwanensis (strain DSM 17343 / BCRC 17206 / CCUG 44338 / CIP 107171 / LMG 19424 / R1) (Ralstonia taiwanensis (strain LMG 19424)).